The chain runs to 282 residues: Undecaprenyl-diphosphatase (282 aa).

The next 7 helical transmembrane spans lie at 6 to 26 (LYFV…FIPV), 45 to 65 (SGKV…MWIF), 85 to 105 (LFTR…AIFI), 112 to 132 (FYHP…MLWV), 200 to 220 (ATEF…VYDM), 230 to 250 (HDLG…LLVV), and 262 to 282 (YRGF…WLAF).

Belongs to the UppP family.

The protein localises to the cell inner membrane. It carries out the reaction di-trans,octa-cis-undecaprenyl diphosphate + H2O = di-trans,octa-cis-undecaprenyl phosphate + phosphate + H(+). Its function is as follows. Catalyzes the dephosphorylation of undecaprenyl diphosphate (UPP). Confers resistance to bacitracin. In Bordetella avium (strain 197N), this protein is Undecaprenyl-diphosphatase.